The chain runs to 400 residues: MASDSGGPGVLSASERDRQYCELCGKMENLLRCGRCRSSFYCCKEHQRQDWKKHKLVCQGGEAPRAQPAPAQPRVAPPPGGAPGAARAGGAARRGDSAAASRVPGPEDAAQARSGPGPAEPGSEDPPLSRSPGPERASLCPAGGGPGEALSPGGGLRPNGQTKPLPALKLALEYIVPCMNKHGICVVDDFLGRETGQQIGDEVRALHDTGKFTDGQLVSQKSDSSKDIRGDQITWIEGKEPGCETIGLLMSSMDDLIRHCSGKLGNYRINGRTKAMVACYPGNGTGYVRHVDNPNGDGRCVTCIYYLNKDWDAKVSGGILRIFPEGKAQFADIEPKFDRLLFFWSDRRNPHEVQPAYATRYAITVWYFDADERARAKVKYLTGEKGVRVELKPNSVSKDV.

Position 2 is an N-acetylalanine (alanine 2). The segment at 6-20 (GGPGVLSASERDRQY) is required for nuclear export. The residue at position 12 (serine 12) is a Phosphoserine. 8 residues coordinate Zn(2+): cysteine 21, cysteine 24, cysteine 33, cysteine 36, cysteine 42, histidine 46, histidine 54, and cysteine 58. The MYND-type; atypical zinc-finger motif lies at 21 to 58 (CELCGKMENLLRCGRCRSSFYCCKEHQRQDWKKHKLVC). Over residues 62-74 (EAPRAQPAPAQPR) the composition is skewed to low complexity. Positions 62–161 (EAPRAQPAPA…PGGGLRPNGQ (100 aa)) are disordered. Position 114 is a phosphoserine (serine 114). Gly residues predominate over residues 142–157 (AGGGPGEALSPGGGLR). Residues cysteine 178 and cysteine 185 each carry the S-nitrosocysteine modification. Positions 218–228 (VSQKSDSSKDI) are beta(2)beta(3) 'finger-like' loop. One can recognise a Fe2OG dioxygenase domain in the interval 271-369 (GRTKAMVACY…RYAITVWYFD (99 aa)). Cysteine 279 carries the post-translational modification S-nitrosocysteine. Fe cation is bound by residues histidine 290 and aspartate 292. An S-nitrosocysteine mark is found at cysteine 300 and cysteine 303. Position 351 (histidine 351) interacts with Fe cation. Residue arginine 360 coordinates 2-oxoglutarate.

In terms of assembly, monomer. Interacts with ING4; the interaction inhibits the hydroxylation of HIF alpha proteins. Interacts with PTGES3 (via PXLE motif); thereby recruiting EGLN1 to the HSP90 pathway to facilitate HIF alpha proteins hydroxylation. Interacts with LIMD1. Found in a complex composed of LIMD1, VHL, EGLN1/PHD2, ELOB and CUL2. Interacts with EPAS1. Interacts with CBFA2T3 and HIF1A. It depends on Fe(2+) as a cofactor. L-ascorbate is required as a cofactor. S-nitrosylation inhibits the enzyme activity up to 60% under aerobic conditions. Chelation of Fe(2+) has no effect on the S-nitrosylation. It is uncertain whether nitrosylation occurs on Cys-300 or Cys-303. As to expression, expressed in heart, brain liver, skeletal muscle and kidney. Low levels were detected in the lung. Constitutively expressed during differentiation of C2C12 skeletal myocytes.

Its subcellular location is the cytoplasm. It localises to the nucleus. It carries out the reaction L-prolyl-[hypoxia-inducible factor alpha subunit] + 2-oxoglutarate + O2 = trans-4-hydroxy-L-prolyl-[hypoxia-inducible factor alpha subunit] + succinate + CO2. In terms of biological role, cellular oxygen sensor that catalyzes, under normoxic conditions, the post-translational formation of 4-hydroxyproline in hypoxia-inducible factor (HIF) alpha proteins. Hydroxylates a specific proline found in each of the oxygen-dependent degradation (ODD) domains (N-terminal, NODD, and C-terminal, CODD) of HIF1A. Also hydroxylates HIF2A. Has a preference for the CODD site for both HIF1A and HIF1B. Hydroxylated HIFs are then targeted for proteasomal degradation via the von Hippel-Lindau ubiquitination complex. Under hypoxic conditions, the hydroxylation reaction is attenuated allowing HIFs to escape degradation resulting in their translocation to the nucleus, heterodimerization with HIF1B, and increased expression of hypoxy-inducible genes. EGLN1 is the most important isozyme under normoxia and, through regulating the stability of HIF1, involved in various hypoxia-influenced processes such as angiogenesis in retinal and cardiac functionality. Target proteins are preferentially recognized via a LXXLAP motif. The polypeptide is Egl nine homolog 1 (Egln1) (Mus musculus (Mouse)).